Consider the following 32-residue polypeptide: ilv operon leader peptide (32 aa).

Its function is as follows. This protein is involved in control of the biosynthesis of isoleucine, leucine, and valine. The polypeptide is ilv operon leader peptide (ivbL) (Escherichia coli (strain K12)).